Reading from the N-terminus, the 319-residue chain is Taste receptor type 2 member 30 (319 aa).

A topological domain (extracellular) is located at residue Met1. The helical transmembrane segment at 2 to 22 (ITFLPIIFSILIVVIFVVGNF) threads the bilayer. Residues 23–46 (ANGFIALVNSIEWVKRQKISFVDQ) are Cytoplasmic-facing. Residues 47-67 (ILTALAVSRVGLLWVLLLHWY) traverse the membrane as a helical segment. The Extracellular segment spans residues 68-86 (ATQLNPAFYSVEVRITVYN). A helical membrane pass occupies residues 87-107 (VWAVTNHFSSWLATSLSMFYL). The Cytoplasmic portion of the chain corresponds to 108–126 (LKIANFSNLIFLRIKRRVK). A helical membrane pass occupies residues 127–147 (SVVLVILLGPLLFLVCHLFVI). The Extracellular portion of the chain corresponds to 148-178 (NMDETIWTKEYEGNMTWKIKLKSAMYHSNMT). Asn161 and Asn176 each carry an N-linked (GlcNAc...) asparagine glycan. Residues 179 to 199 (LTILANFVPLTLTLISFLLLI) traverse the membrane as a helical segment. The Cytoplasmic portion of the chain corresponds to 200–229 (CSLCKHLKKMQLHGKGSQDPSTKVHIKALQ). The helical transmembrane segment at 230 to 250 (TVTSFLLLCAIYFLSMIISVC) threads the bilayer. The Extracellular segment spans residues 251–259 (NLGRLQKQP). A helical transmembrane segment spans residues 260–280 (VFMFCQAIIFSYPSTHPFILI). The Cytoplasmic portion of the chain corresponds to 281–319 (LGNKKLKQIFLSVLWHVRYWVKDRSLRLHRFTRAALCKG).

This sequence belongs to the G-protein coupled receptor T2R family.

The protein localises to the membrane. Its function is as follows. Receptor that may play a role in the perception of bitterness and is gustducin-linked. May play a role in sensing the chemical composition of the gastrointestinal content. The activity of this receptor may stimulate alpha gustducin, mediate PLC-beta-2 activation and lead to the gating of TRPM5. This is Taste receptor type 2 member 30 (TAS2R30) from Pan paniscus (Pygmy chimpanzee).